We begin with the raw amino-acid sequence, 914 residues long: Penicillin-binding protein 1A/1B (914 aa).

Residues 1-29 (MSDQFNSREARRKANSKSSPSPKKGKKRK) form a disordered region. The Cytoplasmic segment spans residues 1 to 37 (MSDQFNSREARRKANSKSSPSPKKGKKRKKGGLFKKT). A helical; Signal-anchor for type II membrane protein transmembrane segment spans residues 38–58 (LFTLLILFVLGVVGGAVTFAV). Over 59–914 (MVSDAPSLDE…TNSSSIEKTN (856 aa)) the chain is Extracellular. The tract at residues 77–246 (STIYDKNGKE…TAYNPVKNPD (170 aa)) is transglycosylase. The active-site Proton donor; for transglycosylase activity is the E115. The interval 329–662 (TKAQDKLDEL…PDSVVEATVE (334 aa)) is transpeptidase. Catalysis depends on S390, which acts as the Acyl-ester intermediate; for transpeptidase activity. Residues 708–795 (KLSGLNVKYD…SYEVPKAEDD (88 aa)) enclose the Fibronectin type-III domain. The interval 773-914 (TAVSDDGKST…TNSSSIEKTN (142 aa)) is disordered. Positions 798–828 (KKDQQQTDDEKQDDEKTQDDTQTDDSQKDDG) are enriched in basic and acidic residues. Residues 829 to 840 (QTDQDQTDDSTN) are compositionally biased toward acidic residues. 2 stretches are compositionally biased toward low complexity: residues 848 to 892 (NTNT…GSDT) and 900 to 914 (SNKT…EKTN).

The protein in the N-terminal section; belongs to the glycosyltransferase 51 family. This sequence in the C-terminal section; belongs to the transpeptidase family. The product expressed from the translation of the ponA gene appears as two bands on a gel (1A and 1B), but the specific amino acid sequence of each protein is unknown. Post-translationally, the N-terminus is blocked.

The protein resides in the cell membrane. The protein localises to the forespore inner membrane. It catalyses the reaction [GlcNAc-(1-&gt;4)-Mur2Ac(oyl-L-Ala-gamma-D-Glu-L-Lys-D-Ala-D-Ala)](n)-di-trans,octa-cis-undecaprenyl diphosphate + beta-D-GlcNAc-(1-&gt;4)-Mur2Ac(oyl-L-Ala-gamma-D-Glu-L-Lys-D-Ala-D-Ala)-di-trans,octa-cis-undecaprenyl diphosphate = [GlcNAc-(1-&gt;4)-Mur2Ac(oyl-L-Ala-gamma-D-Glu-L-Lys-D-Ala-D-Ala)](n+1)-di-trans,octa-cis-undecaprenyl diphosphate + di-trans,octa-cis-undecaprenyl diphosphate + H(+). It carries out the reaction Preferential cleavage: (Ac)2-L-Lys-D-Ala-|-D-Ala. Also transpeptidation of peptidyl-alanyl moieties that are N-acyl substituents of D-alanine.. Its pathway is cell wall biogenesis; peptidoglycan biosynthesis. Functionally, cell wall formation. Synthesis of cross-linked peptidoglycan from the lipid intermediates. The enzyme has a penicillin-insensitive transglycosylase N-terminal domain (formation of linear glycan strands) and a penicillin-sensitive transpeptidase C-terminal domain (cross-linking of the peptide subunits). Required for vegetative growth. Has a partially redundant function with PBP-2A (pbpA) during spore outgrowth. In Bacillus subtilis (strain 168), this protein is Penicillin-binding protein 1A/1B (ponA).